Consider the following 144-residue polypeptide: Superoxide dismutase [Mn], mitochondrial (144 aa).

3 residues coordinate Mn(2+): histidine 10, histidine 58, and aspartate 143.

Belongs to the iron/manganese superoxide dismutase family. Homotetramer. Requires Mn(2+) as cofactor.

The protein resides in the mitochondrion matrix. The catalysed reaction is 2 superoxide + 2 H(+) = H2O2 + O2. In terms of biological role, destroys superoxide anion radicals which are normally produced within the cells and which are toxic to biological systems. The sequence is that of Superoxide dismutase [Mn], mitochondrial from Palinurus vulgaris (European spiny lobster).